The primary structure comprises 103 residues: ATP synthase F(0) complex subunit g, mitochondrial (103 aa).

Alanine 2 bears the N-acetylalanine mark. 4 positions are modified to N6-acetyllysine: lysine 11, lysine 24, lysine 35, and lysine 54.

Component of the ATP synthase complex composed at least of ATP5F1A/subunit alpha, ATP5F1B/subunit beta, ATP5MC1/subunit c (homooctomer), MT-ATP6/subunit a, MT-ATP8/subunit 8, ATP5ME/subunit e, ATP5MF/subunit f, ATP5MG/subunit g, ATP5MK/subunit k, ATP5MJ/subunit j, ATP5F1C/subunit gamma, ATP5F1D/subunit delta, ATP5F1E/subunit epsilon, ATP5PF/subunit F6, ATP5PB/subunit b, ATP5PD/subunit d, ATP5PO/subunit OSCP. ATP synthase complex consists of a soluble F(1) head domain (subunits alpha(3) and beta(3)) - the catalytic core - and a membrane F(0) domain - the membrane proton channel (subunits c, a, 8, e, f, g, k and j). These two domains are linked by a central stalk (subunits gamma, delta, and epsilon) rotating inside the F1 region and a stationary peripheral stalk (subunits F6, b, d, and OSCP).

It localises to the mitochondrion. The protein localises to the mitochondrion inner membrane. Subunit g, of the mitochondrial membrane ATP synthase complex (F(1)F(0) ATP synthase or Complex V) that produces ATP from ADP in the presence of a proton gradient across the membrane which is generated by electron transport complexes of the respiratory chain. ATP synthase complex consist of a soluble F(1) head domain - the catalytic core - and a membrane F(1) domain - the membrane proton channel. These two domains are linked by a central stalk rotating inside the F(1) region and a stationary peripheral stalk. During catalysis, ATP synthesis in the catalytic domain of F(1) is coupled via a rotary mechanism of the central stalk subunits to proton translocation. In vivo, can only synthesize ATP although its ATP hydrolase activity can be activated artificially in vitro. Part of the complex F(0) domain. This chain is ATP synthase F(0) complex subunit g, mitochondrial, found in Bos taurus (Bovine).